Reading from the N-terminus, the 201-residue chain is Probable cobalt-precorrin-6B C(15)-methyltransferase (decarboxylating) (201 aa).

Residues threonine 28, 52 to 56 (GTGTG), aspartate 76, and alanine 105 each bind S-adenosyl-L-methionine.

Belongs to the methyltransferase superfamily. Archaeal-type CbiT family.

The catalysed reaction is Co-precorrin-6B + S-adenosyl-L-methionine = Co-precorrin-7 + S-adenosyl-L-homocysteine + CO2. The protein operates within cofactor biosynthesis; adenosylcobalamin biosynthesis; cob(II)yrinate a,c-diamide from sirohydrochlorin (anaerobic route): step 8/10. Functionally, catalyzes the methylation of C-15 in cobalt-precorrin-6B followed by the decarboxylation of C-12 to form cobalt-precorrin-7. The chain is Probable cobalt-precorrin-6B C(15)-methyltransferase (decarboxylating) from Thermoplasma volcanium (strain ATCC 51530 / DSM 4299 / JCM 9571 / NBRC 15438 / GSS1).